Consider the following 654-residue polypeptide: Protein LYK2 (654 aa).

An N-terminal signal peptide occupies residues 1–25 (MAVSVSKQYMTSLVVILLFISLSSL). The Extracellular portion of the chain corresponds to 26 to 241 (SPTSTSHSCD…PSKKKRSKMK (216 aa)). Cystine bridges form between Cys-50/Cys-102, Cys-57/Cys-163, and Cys-100/Cys-161. Asn-103, Asn-170, Asn-193, and Asn-204 each carry an N-linked (GlcNAc...) asparagine glycan. One copy of the LysM; degenerate repeat lies at 177-217 (YPVGVRDSVSSLAVRFNTTEDAIVSANNKSGVVPLKPALIP). The tract at residues 218-238 (LDHKPEKQGSRKRNPSKKKRS) is disordered. Residues 227–238 (SRKRNPSKKKRS) are compositionally biased toward basic residues. Residues 242–262 (LMIAVSSAIAGVCGLVTLMVF) traverse the membrane as a helical segment. Over 263–654 (GYLHWKKETQ…PLVKKSSIID (392 aa)) the chain is Cytoplasmic. A Protein kinase domain is found at 324–619 (TPRKPVLEIY…EIAERVSRLV (296 aa)). ATP is bound by residues 330–338 (LEIYAFEEL) and Lys-368.

It belongs to the protein kinase superfamily. Ser/Thr protein kinase family.

It localises to the cell membrane. May recognize microbe-derived N-acetylglucosamine (NAG)-containing ligands. This chain is Protein LYK2 (LYK2), found in Arabidopsis thaliana (Mouse-ear cress).